A 162-amino-acid polypeptide reads, in one-letter code: Shikimate kinase (162 aa).

11-16 (GSGKSS) is an ATP binding site. Position 15 (serine 15) interacts with Mg(2+). 3 residues coordinate substrate: aspartate 33, arginine 57, and glycine 80. An ATP-binding site is contributed by arginine 116. Arginine 132 provides a ligand contact to substrate.

Belongs to the shikimate kinase family. In terms of assembly, monomer. Requires Mg(2+) as cofactor.

It is found in the cytoplasm. It catalyses the reaction shikimate + ATP = 3-phosphoshikimate + ADP + H(+). It functions in the pathway metabolic intermediate biosynthesis; chorismate biosynthesis; chorismate from D-erythrose 4-phosphate and phosphoenolpyruvate: step 5/7. Catalyzes the specific phosphorylation of the 3-hydroxyl group of shikimic acid using ATP as a cosubstrate. In Helicobacter pylori (strain G27), this protein is Shikimate kinase.